The following is a 443-amino-acid chain: Tubulin beta chain (443 aa).

GTP contacts are provided by glutamine 11, glutamate 69, serine 138, glycine 142, threonine 143, glycine 144, asparagine 204, and asparagine 226. Position 69 (glutamate 69) interacts with Mg(2+). Positions 424 to 443 are disordered; the sequence is QYQDATAEEEGEFEEEEGEN. Residues 429 to 443 show a composition bias toward acidic residues; that stretch reads TAEEEGEFEEEEGEN.

It belongs to the tubulin family. As to quaternary structure, dimer of alpha and beta chains. A typical microtubule is a hollow water-filled tube with an outer diameter of 25 nm and an inner diameter of 15 nM. Alpha-beta heterodimers associate head-to-tail to form protofilaments running lengthwise along the microtubule wall with the beta-tubulin subunit facing the microtubule plus end conferring a structural polarity. Microtubules usually have 13 protofilaments but different protofilament numbers can be found in some organisms and specialized cells. It depends on Mg(2+) as a cofactor.

The protein localises to the cytoplasm. The protein resides in the cytoskeleton. In terms of biological role, tubulin is the major constituent of microtubules, a cylinder consisting of laterally associated linear protofilaments composed of alpha- and beta-tubulin heterodimers. Microtubules grow by the addition of GTP-tubulin dimers to the microtubule end, where a stabilizing cap forms. Below the cap, tubulin dimers are in GDP-bound state, owing to GTPase activity of alpha-tubulin. The polypeptide is Tubulin beta chain (BETA-TT1) (Tetrahymena pyriformis).